A 773-amino-acid polypeptide reads, in one-letter code: Ethylene receptor 2 (773 aa).

4 helical membrane-spanning segments follow: residues 4–24 (EIAS…VLAI), 53–73 (VSDF…LYFV), 82–102 (WVLF…LLHG), and 122–142 (LTAL…PLLL). Residues cysteine 94 and histidine 98 each contribute to the Cu cation site. One can recognise a GAF domain in the interval 187 to 331 (DRHTILYTTL…VVADQVTVAL (145 aa)). A Histidine kinase domain is found at 374–614 (TMSEGMRRPM…PETMSLLLRF (241 aa)). Residues 647–766 (QVLLVDTNDS…AMESELRRVL (120 aa)) enclose the Response regulatory domain. Aspartate 702 bears the 4-aspartylphosphate mark. A Glycyl lysine isopeptide (Lys-Gly) (interchain with G-Cter in ubiquitin) cross-link involves residue lysine 751.

Belongs to the ethylene receptor family. As to quaternary structure, heteromer with ETR1. Binds to MRF3/ECIP1. Requires Cu cation as cofactor. In terms of processing, autophosphorylated predominantly on Ser residues. In terms of tissue distribution, expressed in seedlings, roots, leaves, flowers, mature siliques, shoot apical meristems, leaf primordia, inflorescence meristems, young floral meristems, developing petals, carpels and ovules. Low expression in stamens.

It is found in the endoplasmic reticulum membrane. Ethylene receptor related to bacterial two-component regulators. Acts as a redundant negative regulator of ethylene signaling. The polypeptide is Ethylene receptor 2 (Arabidopsis thaliana (Mouse-ear cress)).